We begin with the raw amino-acid sequence, 101 residues long: MFVKKGDKVRVIAGKDKGVEAVVLKALPKVNKVIVEGVAIIKKHQKPNSENPQGAIVEKEAPIHASNVQVLDKNGVAGRVGYKFVDGKKVRYNKKSGEVLD.

Belongs to the universal ribosomal protein uL24 family. In terms of assembly, part of the 50S ribosomal subunit.

One of two assembly initiator proteins, it binds directly to the 5'-end of the 23S rRNA, where it nucleates assembly of the 50S subunit. Its function is as follows. One of the proteins that surrounds the polypeptide exit tunnel on the outside of the subunit. This Streptococcus equi subsp. zooepidemicus (strain H70) protein is Large ribosomal subunit protein uL24.